We begin with the raw amino-acid sequence, 262 residues long: Apolipoprotein A-I-1 (262 aa).

An N-terminal signal peptide occupies residues 1–18 (MKFLALALTILLAAGTQA). Positions 32–63 (VKAALSMYIAQVKLTAQRSIDLLDDTEYKEYK) are 3 X approximate tandem repeats. Tandem repeats lie at residues 64–85 (MQLTQSLDNLQQYADATSQSLA) and 87–107 (YSEAFGTQLTDATAAVRAEVM). A 10 X approximate tandem repeats region spans residues 64–262 (MQLTQSLDNL…YETISQAMKA (199 aa)). The 3; half-length repeat unit spans residues 108-118 (KDVEELRSQLE). 5 tandem repeats follow at residues 119–140 (PKRAELKEVLDKHIDEYRKKLE), 141–162 (PLIKEHIELRRTEMEAFRAKME), 163–184 (PIVEELRAKVAINVEETKTKLM), 185–206 (PIVEIVRAKLTERLEELRTLAA), and 207–228 (PYAEEYKEQMIKAVGEVREKVS). Residues 229–239 (PLSEDFKGQVG) form a 9; half-length repeat. Copy 10 of the repeat occupies 240–262 (PAAEQAKQKLLAFYETISQAMKA).

Belongs to the apolipoprotein A1/A4/E family.

It localises to the secreted. In terms of biological role, participates in the reverse transport of cholesterol from tissues to the liver for excretion by promoting cholesterol efflux from tissues and by acting as a cofactor for the lecithin cholesterol acyltransferase (LCAT). This is Apolipoprotein A-I-1 from Oncorhynchus mykiss (Rainbow trout).